Reading from the N-terminus, the 117-residue chain is DNA-directed RNA polymerase subunit omega (117 aa).

Over residues 96 to 105 (KEEAEEEAKQ) the composition is skewed to basic and acidic residues. The disordered stretch occupies residues 96 to 117 (KEEAEEEAKQKNSRAAKAAAAE). Residues 108–117 (SRAAKAAAAE) are compositionally biased toward low complexity.

Belongs to the RNA polymerase subunit omega family. In terms of assembly, the RNAP catalytic core consists of 2 alpha, 1 beta, 1 beta' and 1 omega subunit. When a sigma factor is associated with the core the holoenzyme is formed, which can initiate transcription.

The catalysed reaction is RNA(n) + a ribonucleoside 5'-triphosphate = RNA(n+1) + diphosphate. Promotes RNA polymerase assembly. Latches the N- and C-terminal regions of the beta' subunit thereby facilitating its interaction with the beta and alpha subunits. The protein is DNA-directed RNA polymerase subunit omega (rpoZ) of Lactococcus lactis subsp. lactis (strain IL1403) (Streptococcus lactis).